We begin with the raw amino-acid sequence, 234 residues long: N-acetyl-alpha-D-glucosaminyl L-malate deacetylase 1 (234 aa).

Residues His12, Asp15, and His113 each coordinate Zn(2+).

Belongs to the PIGL family. Homohexamer. Trimer of dimers. It depends on Zn(2+) as a cofactor.

The enzyme catalyses (S)-malyl N-acetyl-alpha-D-glucosaminide + H2O = (S)-malyl alpha-D-glucosaminide + acetate. Involved in bacillithiol (BSH) biosynthesis. Catalyzes the second step of the pathway, the deacetylation of N-acetylglucosaminylmalate (GlcNAc-Mal) to glucosamine malate (GlcN-Mal). This Bacillus cereus (strain ATCC 14579 / DSM 31 / CCUG 7414 / JCM 2152 / NBRC 15305 / NCIMB 9373 / NCTC 2599 / NRRL B-3711) protein is N-acetyl-alpha-D-glucosaminyl L-malate deacetylase 1.